The sequence spans 311 residues: Fructose-1,6-bisphosphatase class 1 (311 aa).

Residues glutamate 90, aspartate 110, leucine 112, and aspartate 113 each contribute to the Mg(2+) site. Substrate is bound by residues 113-116 (DGSS), tyrosine 221, and lysine 251. A Mg(2+)-binding site is contributed by glutamate 257.

It belongs to the FBPase class 1 family. Homotetramer. Mg(2+) is required as a cofactor.

Its subcellular location is the cytoplasm. The enzyme catalyses beta-D-fructose 1,6-bisphosphate + H2O = beta-D-fructose 6-phosphate + phosphate. It participates in carbohydrate biosynthesis; gluconeogenesis. This is Fructose-1,6-bisphosphatase class 1 from Methanospirillum hungatei JF-1 (strain ATCC 27890 / DSM 864 / NBRC 100397 / JF-1).